The sequence spans 156 residues: Small ribosomal subunit protein uS7 (156 aa).

Belongs to the universal ribosomal protein uS7 family. In terms of assembly, part of the 30S ribosomal subunit. Contacts proteins S9 and S11.

In terms of biological role, one of the primary rRNA binding proteins, it binds directly to 16S rRNA where it nucleates assembly of the head domain of the 30S subunit. Is located at the subunit interface close to the decoding center, probably blocks exit of the E-site tRNA. This Dehalococcoides mccartyi (strain ATCC BAA-2100 / JCM 16839 / KCTC 5957 / BAV1) protein is Small ribosomal subunit protein uS7.